The following is a 345-amino-acid chain: Mitochondrial substrate carrier family protein J (345 aa).

Over 1 to 31 (MSSSHTIQETKEVHTKTNKRIQWDDLDPKRY) the chain is Mitochondrial intermembrane. 3 Solcar repeats span residues 30–118 (RYYF…VKQG), 129–217 (DLLF…SKSK), and 255–342 (EDPI…VKKL). The chain crosses the membrane as a helical span at residues 32 to 52 (YFYNFLLGGSIDLLMFPLDVI). Residues 53–88 (RTRLQVQGSQNVIQSFPQYNGTFDGFKKLIRLEGKR) lie on the Mitochondrial matrix side of the membrane. The chain crosses the membrane as a helical span at residues 89-110 (ALYKGFLTSECGYLCSRAIYFG). The Mitochondrial intermembrane segment spans residues 111–129 (SYEFVKQGFLKGRSDSDSD). The chain crosses the membrane as a helical span at residues 130 to 150 (LLFVTTISGAISEALASVIWV). Residues 151–191 (PFDVATQSVQIQGSLSKPKYKGGSDVFKKIYGERGIKGLYK) lie on the Mitochondrial matrix side of the membrane. A helical transmembrane segment spans residues 192–208 (GFGATIIRNVPYSGIWW). The Mitochondrial intermembrane segment spans residues 209–257 (GTYEISKSKLTQFNIRQKLGLKERSSHSLAVSAEIDKNNPSHEVENEDP). A helical transmembrane segment spans residues 258 to 278 (IIHFISGFFAAVFATSITNPL). Residues 279-316 (DVAKTRLQTGVFPENEKPNFYTIIKSTIRKEGIRALWK) are Mitochondrial matrix-facing. The helical transmembrane segment at 317–337 (GLVPSLLTSTPYSMISIFLYE) threads the bilayer. Topologically, residues 338-345 (EVKKLSLK) are mitochondrial intermembrane.

The protein belongs to the mitochondrial carrier (TC 2.A.29) family.

It localises to the mitochondrion inner membrane. In terms of biological role, mitochondrial solute carriers shuttle metabolites, nucleotides, and cofactors through the mitochondrial inner membrane. This is Mitochondrial substrate carrier family protein J (mcfJ) from Dictyostelium discoideum (Social amoeba).